The following is a 354-amino-acid chain: Uroporphyrinogen decarboxylase (354 aa).

Substrate contacts are provided by residues 27–31 (RQAGR), Asp77, Tyr154, Thr209, and His327.

This sequence belongs to the uroporphyrinogen decarboxylase family. In terms of assembly, homodimer.

Its subcellular location is the cytoplasm. It carries out the reaction uroporphyrinogen III + 4 H(+) = coproporphyrinogen III + 4 CO2. The protein operates within porphyrin-containing compound metabolism; protoporphyrin-IX biosynthesis; coproporphyrinogen-III from 5-aminolevulinate: step 4/4. Catalyzes the decarboxylation of four acetate groups of uroporphyrinogen-III to yield coproporphyrinogen-III. This is Uroporphyrinogen decarboxylase from Serratia proteamaculans (strain 568).